A 419-amino-acid polypeptide reads, in one-letter code: S-adenosylmethionine synthase (419 aa).

His15 contributes to the ATP binding site. Residue Asp17 coordinates Mg(2+). Glu43 is a K(+) binding site. Residues Glu56 and Gln100 each coordinate L-methionine. The interval 100–110 (QSPDIAQGVDE) is flexible loop. Residues 171–173 (DGK), 248–249 (KF), Asp257, 263–264 (RK), Ala280, and Lys284 each bind ATP. An L-methionine-binding site is contributed by Asp257. Residue Lys288 participates in L-methionine binding.

It belongs to the AdoMet synthase family. In terms of assembly, homotetramer; dimer of dimers. Requires Mg(2+) as cofactor. It depends on K(+) as a cofactor.

Its subcellular location is the cytoplasm. It carries out the reaction L-methionine + ATP + H2O = S-adenosyl-L-methionine + phosphate + diphosphate. It functions in the pathway amino-acid biosynthesis; S-adenosyl-L-methionine biosynthesis; S-adenosyl-L-methionine from L-methionine: step 1/1. Catalyzes the formation of S-adenosylmethionine (AdoMet) from methionine and ATP. The overall synthetic reaction is composed of two sequential steps, AdoMet formation and the subsequent tripolyphosphate hydrolysis which occurs prior to release of AdoMet from the enzyme. In Synechococcus sp. (strain CC9311), this protein is S-adenosylmethionine synthase.